Here is a 356-residue protein sequence, read N- to C-terminus: Peptide chain release factor 1 (356 aa).

Glutamine 230 carries the post-translational modification N5-methylglutamine. The segment covering 279-289 (ALDSARSEARK) has biased composition (basic and acidic residues). A disordered region spans residues 279-299 (ALDSARSEARKSQVGSGDRSE).

The protein belongs to the prokaryotic/mitochondrial release factor family. Methylated by PrmC. Methylation increases the termination efficiency of RF1.

Its subcellular location is the cytoplasm. Its function is as follows. Peptide chain release factor 1 directs the termination of translation in response to the peptide chain termination codons UAG and UAA. In Caulobacter vibrioides (strain ATCC 19089 / CIP 103742 / CB 15) (Caulobacter crescentus), this protein is Peptide chain release factor 1 (prfA).